A 193-amino-acid chain; its full sequence is Orotate phosphoribosyltransferase (193 aa).

Residue 116–124 (EDVVTTGKS) coordinates 5-phospho-alpha-D-ribose 1-diphosphate. The orotate site is built by threonine 120 and arginine 148.

It belongs to the purine/pyrimidine phosphoribosyltransferase family. PyrE subfamily. In terms of assembly, homodimer. Requires Mg(2+) as cofactor.

The catalysed reaction is orotidine 5'-phosphate + diphosphate = orotate + 5-phospho-alpha-D-ribose 1-diphosphate. It functions in the pathway pyrimidine metabolism; UMP biosynthesis via de novo pathway; UMP from orotate: step 1/2. In terms of biological role, catalyzes the transfer of a ribosyl phosphate group from 5-phosphoribose 1-diphosphate to orotate, leading to the formation of orotidine monophosphate (OMP). In Clostridium tetani (strain Massachusetts / E88), this protein is Orotate phosphoribosyltransferase.